Here is a 277-residue protein sequence, read N- to C-terminus: Diaminopimelate epimerase (277 aa).

Asn13, Gln46, and Asn66 together coordinate substrate. Residue Cys75 is the Proton donor of the active site. Substrate contacts are provided by residues 76-77 (GN), Asn159, Asn192, and 210-211 (ER). Cys219 (proton acceptor) is an active-site residue. A substrate-binding site is contributed by 220-221 (GT).

It belongs to the diaminopimelate epimerase family. As to quaternary structure, homodimer.

Its subcellular location is the cytoplasm. It catalyses the reaction (2S,6S)-2,6-diaminopimelate = meso-2,6-diaminopimelate. It functions in the pathway amino-acid biosynthesis; L-lysine biosynthesis via DAP pathway; DL-2,6-diaminopimelate from LL-2,6-diaminopimelate: step 1/1. Its function is as follows. Catalyzes the stereoinversion of LL-2,6-diaminopimelate (L,L-DAP) to meso-diaminopimelate (meso-DAP), a precursor of L-lysine and an essential component of the bacterial peptidoglycan. The chain is Diaminopimelate epimerase from Azoarcus sp. (strain BH72).